The following is a 203-amino-acid chain: MKKIYKALISSLLLSTSINVAYAETQYVTENLSTFLRRGAGEQFKIAGSIQAGEAVNVLDRQGKYTLIRDNKNREAWILNSDLSSTPSSKEENPKLKAQVQELTLKLSRLDGDWQQRTVEMQRRTKQAEQQSAVLLEQNSQLKRELEMTKNKNRDLEAILDAGKREIAIQWFIYGGSVLGVGLLFGLLIPYVLPKRRRRDGWA.

Positions 1 to 23 (MKKIYKALISSLLLSTSINVAYA) are cleaved as a signal peptide. The 64-residue stretch at 24–87 (ETQYVTENLS…ILNSDLSSTP (64 aa)) folds into the SH3b domain. Residues 167 to 189 (IAIQWFIYGGSVLGVGLLFGLLI) traverse the membrane as a helical segment.

The protein to E.coli YgiM.

The protein localises to the membrane. This is an uncharacterized protein from Haemophilus influenzae (strain ATCC 51907 / DSM 11121 / KW20 / Rd).